The chain runs to 480 residues: Cobyric acid synthase (480 aa).

The GATase cobBQ-type domain occupies 246-434 (KILIAVPILP…VHGLFSELAQ (189 aa)). Residue cysteine 328 is the Nucleophile of the active site. Residue histidine 426 is part of the active site.

This sequence belongs to the CobB/CobQ family. CobQ subfamily.

It participates in cofactor biosynthesis; adenosylcobalamin biosynthesis. Functionally, catalyzes amidations at positions B, D, E, and G on adenosylcobyrinic A,C-diamide. NH(2) groups are provided by glutamine, and one molecule of ATP is hydrogenolyzed for each amidation. This is Cobyric acid synthase from Methylocella silvestris (strain DSM 15510 / CIP 108128 / LMG 27833 / NCIMB 13906 / BL2).